A 412-amino-acid polypeptide reads, in one-letter code: Argininosuccinate synthase (412 aa).

ATP-binding positions include 11 to 19 (AYSGGLDTS) and A37. Y88 and S93 together coordinate L-citrulline. 116-124 (SHGATGKGN) contacts ATP. Residues T120, N124, and D125 each coordinate L-aspartate. Position 124 (N124) interacts with L-citrulline. L-citrulline is bound by residues R128, S181, S190, E271, and Y283.

Belongs to the argininosuccinate synthase family. As to quaternary structure, homotetramer.

It is found in the cytoplasm. It localises to the cytosol. The catalysed reaction is L-citrulline + L-aspartate + ATP = 2-(N(omega)-L-arginino)succinate + AMP + diphosphate + H(+). Its pathway is amino-acid biosynthesis; L-arginine biosynthesis; L-arginine from L-ornithine and carbamoyl phosphate: step 2/3. It participates in nitrogen metabolism; urea cycle; (N(omega)-L-arginino)succinate from L-aspartate and L-citrulline: step 1/1. Functionally, one of the enzymes of the urea cycle, the metabolic pathway transforming neurotoxic amonia produced by protein catabolism into inocuous urea in the liver of ureotelic animals. Catalyzes the formation of arginosuccinate from aspartate, citrulline and ATP and together with ASL it is responsible for the biosynthesis of arginine in most body tissues. This chain is Argininosuccinate synthase, found in Xenopus tropicalis (Western clawed frog).